Consider the following 437-residue polypeptide: Ankyrin repeat domain-containing protein OPG015 (437 aa).

ANK repeat units follow at residues 117–146, 220–249, and 253–290; these read QDLL…VIYK, GGRT…NVNA, and NGYT…SIDC.

The protein belongs to the orthopoxvirus OPG015 family.

May be involved in virus-host protein interaction through the ankyrin repeats. The chain is Ankyrin repeat domain-containing protein OPG015 (OPG015) from Monkeypox virus.